A 206-amino-acid polypeptide reads, in one-letter code: Molybdopterin synthase catalytic subunit (206 aa).

Polar residues predominate over residues 1–23; that stretch reads MATQQPTQTDNSAQAQPPQTNPA. Residues 1–27 are disordered; that stretch reads MATQQPTQTDNSAQAQPPQTNPAKPTE. Substrate is bound by residues 131–132, lysine 147, and 154–156; these read HR and KRE. Over residues 177–188 the composition is skewed to basic and acidic residues; the sequence is KVDEPRIGKGEV. The segment at 177–206 is disordered; the sequence is KVDEPRIGKGEVDEKEDEGDSGNGGNDRKS. Positions 197–206 are enriched in gly residues; sequence SGNGGNDRKS.

This sequence belongs to the MoaE family. MOCS2B subfamily. In terms of assembly, heterotetramer; composed of 2 small (MOCS2A) and 2 large (MOCS2B) subunits.

The protein localises to the cytoplasm. The catalysed reaction is 2 [molybdopterin-synthase sulfur-carrier protein]-C-terminal-Gly-aminoethanethioate + cyclic pyranopterin phosphate + H2O = molybdopterin + 2 [molybdopterin-synthase sulfur-carrier protein]-C-terminal Gly-Gly + 2 H(+). Its pathway is cofactor biosynthesis; molybdopterin biosynthesis. Functionally, catalytic subunit of the molybdopterin synthase complex, a complex that catalyzes the conversion of precursor Z into molybdopterin. Acts by mediating the incorporation of 2 sulfur atoms from thiocarboxylated MOCS2A into precursor Z to generate a dithiolene group. The polypeptide is Molybdopterin synthase catalytic subunit (nit-8) (Neurospora crassa (strain ATCC 24698 / 74-OR23-1A / CBS 708.71 / DSM 1257 / FGSC 987)).